We begin with the raw amino-acid sequence, 291 residues long: uncharacterized protein (291 aa).

The next 10 helical transmembrane spans lie at 5–23 (ILLS…YFST), 33–52 (IFGF…VFLF), 69–91 (PLLI…LFLW), 101–120 (VSFG…RLVF), 127–144 (VKFL…SNIL), 148–165 (GLSW…TYFA), 172–194 (INDL…YFAW), 209–228 (LLLL…TYIV), 235–257 (INVL…FLIG), and 262–284 (SETI…EGLV).

Belongs to the EamA transporter family.

It localises to the cell membrane. This is an uncharacterized protein from Pasteurella multocida (strain Pm70).